Reading from the N-terminus, the 448-residue chain is Phosphoglucosamine mutase (448 aa).

Serine 101 functions as the Phosphoserine intermediate in the catalytic mechanism. Mg(2+) is bound by residues serine 101, aspartate 242, aspartate 244, and aspartate 246. A Phosphoserine modification is found at serine 101.

The protein belongs to the phosphohexose mutase family. The cofactor is Mg(2+). In terms of processing, activated by phosphorylation.

It catalyses the reaction alpha-D-glucosamine 1-phosphate = D-glucosamine 6-phosphate. Functionally, catalyzes the conversion of glucosamine-6-phosphate to glucosamine-1-phosphate. The sequence is that of Phosphoglucosamine mutase from Nitrobacter winogradskyi (strain ATCC 25391 / DSM 10237 / CIP 104748 / NCIMB 11846 / Nb-255).